The sequence spans 457 residues: MEEQARPPSRPAASATLPGSAHPGGAASTATAAALSFSSVATVTLGNQSDAGRPEAAGSRGPAPLLWHGAAVAAQALVLLLIFLLSSLGNCAVMGVIVKHRQLRTVTNAFILSLSLSDLLTALLCLPAAFLDLFAPPGDSGPWRSFCAASRFFSSCFGIVSTFSVALISLDRYCAIVRPPRDKLGRRRALQLLAGAWLAALGFSLPWELLRAPREPPTPQSFHRCLYRTSPDPAQLGAAYSVGLVVACYLLPFLLMCFCRYHICKTVRLSDVRVRPMTTYARVLRFFSEVRTATTVLIMIVFVICCWGPYCFLVLLAATRQGQTTQAPSLLNVAAVWLTWANGAINPVIYAIRNPNISMFLGRNREEGYRTRNMDVFLPSQGLGFQARSRNRLRNGCANRLGACSRMPSSNPASGSGGEVVMWARKNPVVLFFREDPPDPVMAVYKQHKSETRDSSI.

Residues Met1–Ala27 form a disordered region. Topologically, residues Met1–Pro64 are extracellular. N-linked (GlcNAc...) asparagine glycosylation occurs at Asn47. A helical transmembrane segment spans residues Leu65–Leu85. Residues Ser86–Ala109 lie on the Cytoplasmic side of the membrane. A helical membrane pass occupies residues Phe110–Phe130. Residues Leu131–Cys156 lie on the Extracellular side of the membrane. The chain crosses the membrane as a helical span at residues Phe157 to Val177. At Arg178 to Ala189 the chain is on the cytoplasmic side. The chain crosses the membrane as a helical span at residues Leu190–Leu210. Topologically, residues Arg211 to Gln235 are extracellular. The chain crosses the membrane as a helical span at residues Leu236 to Met256. Topologically, residues Cys257–Thr295 are cytoplasmic. Residues Val296 to Leu316 traverse the membrane as a helical segment. The Extracellular segment spans residues Ala317–Ser329. Residues Leu330 to Tyr350 form a helical membrane-spanning segment. Topologically, residues Ala351 to Ile457 are cytoplasmic.

It belongs to the G-protein coupled receptor 1 family. As to quaternary structure, interacts with MTNR1B. Interacts with ARRB1 and ARRB2 in a spontaneous and agonist-independent manner; leading to the internalization of GPR135 in the endosomal compartment.

The protein resides in the cell membrane. Its subcellular location is the endosome membrane. Orphan receptor. Has spontaneous activity for beta-arrestin recruitment. Shows a reciprocal regulatory interaction with the melatonin receptor MTNR1B most likely through receptor heteromerization. The chain is G-protein coupled receptor 135 (Gpr135) from Rattus norvegicus (Rat).